A 378-amino-acid chain; its full sequence is Glutamate 5-kinase (378 aa).

Lys19 contacts ATP. Residues Ser59, Asp146, and Asn158 each coordinate substrate. 178–179 (TD) serves as a coordination point for ATP. The 79-residue stretch at 285–363 (RGSVAVDAGA…SEFERLLGYT (79 aa)) folds into the PUA domain.

Belongs to the glutamate 5-kinase family.

It localises to the cytoplasm. It catalyses the reaction L-glutamate + ATP = L-glutamyl 5-phosphate + ADP. It participates in amino-acid biosynthesis; L-proline biosynthesis; L-glutamate 5-semialdehyde from L-glutamate: step 1/2. Functionally, catalyzes the transfer of a phosphate group to glutamate to form L-glutamate 5-phosphate. This is Glutamate 5-kinase from Polaromonas sp. (strain JS666 / ATCC BAA-500).